The sequence spans 27 residues: Conotoxin flf14a (27 aa).

Cystine bridges form between C6/C26 and C10/C22.

Expressed by the venom duct.

The protein resides in the secreted. The chain is Conotoxin flf14a from Conus anabathrum floridanus (Florida cone).